The following is a 424-amino-acid chain: Hemagglutinin-esterase (424 aa).

The first 16 residues, 1–16, serve as a signal peptide directing secretion; it reads MFLLPRFVLVSCIIGS. The tract at residues 7–127 is esterase domain 1; it reads FVLVSCIIGS…SNDIWMQNKG (121 aa). The Virion surface segment spans residues 17–392; sequence LGFDNPPTNV…PICVYDPLPI (376 aa). Ser40 functions as the Nucleophile in the catalytic mechanism. Residues Cys44 and Cys65 are joined by a disulfide bond. N-linked (GlcNAc...) asparagine; by host glycosylation is found at Asn54, Asn89, Asn153, Asn236, and Asn301. 3 cysteine pairs are disulfide-bonded: Cys113–Cys162, Cys197–Cys276, and Cys205–Cys249. Residues 128–266 are receptor binding; sequence LFYTQVYKNM…GNYLAISNEL (139 aa). The interval 267–379 is esterase domain 2; the sequence is LLTVPTKAIC…RCPTAADINT (113 aa). An intrachain disulfide couples Cys307 to Cys312. N-linked (GlcNAc...) asparagine; by host glycosylation is present at Asn316. Residues Asp326 and His329 each act as charge relay system in the active site. Cysteines 347 and 371 form a disulfide. Asn358 carries an N-linked (GlcNAc...) asparagine; by host glycan. The helical transmembrane segment at 393–413 threads the bilayer; sequence ILLGILLGVAVIIIVVLLLYF. Over 414 to 424 the chain is Intravirion; the sequence is MVDNGTRLHDA. A glycan (N-linked (GlcNAc...) asparagine; by host) is linked at Asn417.

This sequence belongs to the influenza type C/coronaviruses hemagglutinin-esterase family. As to quaternary structure, homodimer; disulfide-linked. Forms a complex with the M protein in the pre-Golgi. Associates then with S-M complex to form a ternary complex S-M-HE. N-glycosylated in the RER. In terms of processing, N-glycosylated in the host RER.

Its subcellular location is the virion membrane. The protein resides in the host cell membrane. The catalysed reaction is N-acetyl-9-O-acetylneuraminate + H2O = N-acetylneuraminate + acetate + H(+). It carries out the reaction N-acetyl-4-O-acetylneuraminate + H2O = N-acetylneuraminate + acetate + H(+). Its function is as follows. Structural protein that makes short spikes at the surface of the virus. Contains receptor binding and receptor-destroying activities. Mediates de-O-acetylation of N-acetyl-4-O-acetylneuraminic acid, which is probably the receptor determinant recognized by the virus on the surface of erythrocytes and susceptible cells. This receptor-destroying activity is important for virus release as it probably helps preventing self-aggregation and ensures the efficient spread of the progeny virus from cell to cell. May serve as a secondary viral attachment protein for initiating infection, the spike protein being the major one. May become a target for both the humoral and the cellular branches of the immune system. The protein is Hemagglutinin-esterase of Bovine coronavirus (strain 98TXSF-110-ENT) (BCoV-ENT).